Here is a 1852-residue protein sequence, read N- to C-terminus: Chitin synthase csmA (1852 aa).

Positions 1-20 (MVGTLPAGHTPSHVQSSLPS) are disordered. Residues 1–787 (MVGTLPAGHT…CWADLAKVGE (787 aa)) form the Myosin motor domain. N-linked (GlcNAc...) asparagine glycosylation occurs at Asn58. 102–109 (GESGAGKT) lines the ATP pocket. The tract at residues 599–646 (SSKPLRMPSMARRKTSPASRLTFDATPAEDPYETESQTGSSAKNSSAK) is disordered. N-linked (GlcNAc...) asparagine glycosylation is present at Asn642. The tract at residues 667-691 (LDIVNKCLTSGNLNPYFVFCLKPND) is actin-binding. Residue Asn840 is glycosylated (N-linked (GlcNAc...) asparagine). 2 helical membrane-spanning segments follow: residues 895-915 (WMAI…RYIG) and 930-950 (FAIN…IVGF). The Cytochrome b5 heme-binding domain occupies 958–1017 (QHVYSPAELSSHDGKDGHSSYTSIRGLVLDLGEFMDSHYPGIVPDSALKKYAGVDSTALF). 2 N-linked (GlcNAc...) asparagine glycosylation sites follow: Asn1044 and Asn1195. The helical transmembrane segment at 1205 to 1225 (FILAISVLICSVIVFKFFAAL) threads the bilayer. Asn1428, Asn1462, and Asn1568 each carry an N-linked (GlcNAc...) asparagine glycan. Helical transmembrane passes span 1600–1620 (ISTI…VWLV), 1626–1646 (IPWT…IIFI), and 1653–1673 (MIGW…ALPL). A DEK-C domain is found at 1794 to 1849 (LPSDDAILSEIRDILRTADLMTVTKKNIKQELERRFGVNLDAKRPYINSATEAVLS).

In the N-terminal section; belongs to the TRAFAC class myosin-kinesin ATPase superfamily. Myosin family. This sequence in the C-terminal section; belongs to the chitin synthase family. Class V subfamily. As to quaternary structure, binds F-actin via its N-terminal myosin motor-like domain (MMD). Interacts with kibesin kinA.

It is found in the cell membrane. The protein resides in the cell septum. Its subcellular location is the cell tip. It catalyses the reaction [(1-&gt;4)-N-acetyl-beta-D-glucosaminyl](n) + UDP-N-acetyl-alpha-D-glucosamine = [(1-&gt;4)-N-acetyl-beta-D-glucosaminyl](n+1) + UDP + H(+). In terms of biological role, polymerizes chitin, a structural polymer of the cell wall and septum, by transferring the sugar moiety of UDP-GlcNAc to the non-reducing end of the growing chitin polymer. Plays an important role in polarized hyphal cell wall synthesis and maintenance of cell wall integrity. Its role in growth and morphogenesis is particularly important under low osmotic conditions. The protein is Chitin synthase csmA of Emericella nidulans (Aspergillus nidulans).